Reading from the N-terminus, the 48-residue chain is ATP synthase protein 8 (48 aa).

A helical membrane pass occupies residues 12–32 (LLTGGILAISLLLYFVATYLL).

It belongs to the ATPase protein 8 family. F-type ATPases have 2 components, CF(1) - the catalytic core - and CF(0) - the membrane proton channel.

Its subcellular location is the mitochondrion membrane. Its function is as follows. Mitochondrial membrane ATP synthase (F(1)F(0) ATP synthase or Complex V) produces ATP from ADP in the presence of a proton gradient across the membrane which is generated by electron transport complexes of the respiratory chain. F-type ATPases consist of two structural domains, F(1) - containing the extramembraneous catalytic core and F(0) - containing the membrane proton channel, linked together by a central stalk and a peripheral stalk. During catalysis, ATP synthesis in the catalytic domain of F(1) is coupled via a rotary mechanism of the central stalk subunits to proton translocation. Part of the complex F(0) domain. Minor subunit located with subunit a in the membrane. This is ATP synthase protein 8 (ATP8) from Candida parapsilosis (Yeast).